Consider the following 392-residue polypeptide: Galactokinase (392 aa).

Positions 37, 43, 44, and 46 each coordinate alpha-D-galactose. Positions 136, 138, 140, and 141 each coordinate ATP. Asp-186 contacts alpha-D-galactose. Residue Asp-186 is the Proton acceptor of the active site. Ser-230 is subject to Phosphoserine. Tyr-236 contributes to the alpha-D-galactose binding site.

Belongs to the GHMP kinase family. GalK subfamily. Homodimer.

It carries out the reaction alpha-D-galactose + ATP = alpha-D-galactose 1-phosphate + ADP + H(+). It functions in the pathway carbohydrate metabolism; galactose metabolism. Its function is as follows. Catalyzes the transfer of a phosphate from ATP to alpha-D-galactose and participates in the first committed step in the catabolism of galactose. The chain is Galactokinase (GALK1) from Canis lupus familiaris (Dog).